The following is a 243-amino-acid chain: MKIDILTLFPEMFAPLEHSIVGKAKEKGLLDIHYHNFRDYAEKARHVDDEPYGGGQGMLLRAQPIFDTIEQIEAKKPRIILLDPAGKPFTQAYAEELALEEELIFICGHYEGYDERIKTLVTDEISLGDFVLTGGELAAMTIVDATVRLIPQVLGKESSHQDDSFSSGLLEYPQYTRPYDYRGMTVPDVLMSGHHERIRLWRLEESLRKTYLRRPDLLERYDFSEEERKLLDKIKEALGQGED.

Residues Gly108 and 127–132 contribute to the S-adenosyl-L-methionine site; that span reads LGDFVL.

The protein belongs to the RNA methyltransferase TrmD family. As to quaternary structure, homodimer.

It localises to the cytoplasm. The catalysed reaction is guanosine(37) in tRNA + S-adenosyl-L-methionine = N(1)-methylguanosine(37) in tRNA + S-adenosyl-L-homocysteine + H(+). Its function is as follows. Specifically methylates guanosine-37 in various tRNAs. The protein is tRNA (guanine-N(1)-)-methyltransferase of Streptococcus pyogenes serotype M5 (strain Manfredo).